We begin with the raw amino-acid sequence, 171 residues long: Glutathione peroxidase-like peroxiredoxin GPX3 (171 aa).

Cys-43 (cysteine sulfenic acid (-SOH) intermediate) is an active-site residue. An intrachain disulfide couples Cys-43 to Cys-89.

It belongs to the glutathione peroxidase family. In terms of assembly, interacts with CAP1 and probably YBP1.

The catalysed reaction is a hydroperoxide + [thioredoxin]-dithiol = an alcohol + [thioredoxin]-disulfide + H2O. Its function is as follows. Involved in oxidative stress response and redox homeostasis. Functions as a sensor and transducer of hydroperoxide stress. In response to hydroperoxide stress it oxidizes (activates) the transcription activator CAP1, which is involved in transcription activation of genes of the oxidative stress response pathway. May also play a direct role in hydroperoxide scavenging. The enzyme is not required for the glutaredoxin-mediated antioxidant function. In the presence of peroxides, GPX3 is directly oxidized at Cys-43 to form a cysteine sulfenic acid (-SOH). Cys-43-SOH then forms either an intramolecular disulfide bond (Cys-43 with Cys-89) or a transient, intermolecular disulfide bond with 'Cys-446' of CAP1, which is further resolved into a CAP1 intramolecular disulfide bond ('Cys-303' with 'Cys-598'), which causes its nuclear accumulation and activation, and a reduced Cys-43 in GPX3. Required for C.albicans-mediated macrophage killing. The polypeptide is Glutathione peroxidase-like peroxiredoxin GPX3 (Candida albicans (strain SC5314 / ATCC MYA-2876) (Yeast)).